Reading from the N-terminus, the 282-residue chain is Bifunctional protein FolD (282 aa).

Residues 164-166 (GAS), isoleucine 189, and isoleucine 230 contribute to the NADP(+) site.

Belongs to the tetrahydrofolate dehydrogenase/cyclohydrolase family. As to quaternary structure, homodimer.

The enzyme catalyses (6R)-5,10-methylene-5,6,7,8-tetrahydrofolate + NADP(+) = (6R)-5,10-methenyltetrahydrofolate + NADPH. It carries out the reaction (6R)-5,10-methenyltetrahydrofolate + H2O = (6R)-10-formyltetrahydrofolate + H(+). It functions in the pathway one-carbon metabolism; tetrahydrofolate interconversion. Functionally, catalyzes the oxidation of 5,10-methylenetetrahydrofolate to 5,10-methenyltetrahydrofolate and then the hydrolysis of 5,10-methenyltetrahydrofolate to 10-formyltetrahydrofolate. In Campylobacter jejuni subsp. jejuni serotype O:6 (strain 81116 / NCTC 11828), this protein is Bifunctional protein FolD.